We begin with the raw amino-acid sequence, 449 residues long: Signal recognition particle protein (449 aa).

GTP contacts are provided by residues 109-116 (GLQGSGKT), 191-195 (DTAGR), and 249-252 (SRID).

This sequence belongs to the GTP-binding SRP family. SRP54 subfamily. In terms of assembly, part of the signal recognition particle protein translocation system, which is composed of SRP and FtsY. SRP is a ribonucleoprotein composed of Ffh and a 4.5S RNA molecule.

The protein localises to the cytoplasm. It carries out the reaction GTP + H2O = GDP + phosphate + H(+). Involved in targeting and insertion of nascent membrane proteins into the cytoplasmic membrane. Binds to the hydrophobic signal sequence of the ribosome-nascent chain (RNC) as it emerges from the ribosomes. The SRP-RNC complex is then targeted to the cytoplasmic membrane where it interacts with the SRP receptor FtsY. Interaction with FtsY leads to the transfer of the RNC complex to the Sec translocase for insertion into the membrane, the hydrolysis of GTP by both Ffh and FtsY, and the dissociation of the SRP-FtsY complex into the individual components. This is Signal recognition particle protein from Rickettsia bellii (strain RML369-C).